Reading from the N-terminus, the 1331-residue chain is ABC multidrug transporter MDR2 (1331 aa).

The disordered stretch occupies residues 1–50 (MVEPSEKPNTQNDDVSKQEIRNPVSSSSSTSDKEKVAKKGNSDATKSLTP). The segment covering 31-41 (SDKEKVAKKGN) has biased composition (basic and acidic residues). 4 helical membrane-spanning segments follow: residues 93 to 113 (MILLAIVSLASIAAGAALPLF), 147 to 167 (YFVYLGIAQFILLYVSTVGFI), 219 to 239 (KVGLTLTALSTFFSAFIIGYV), and 242 to 262 (WKLALICTSTIVAMVLVMGGI). Residues 97–387 (AIVSLASIAA…VAPNTQAFAS (291 aa)) form the ABC transmembrane type-1 1 domain. Asn-293 is a glycosylation site (N-linked (GlcNAc...) asparagine). Transmembrane regions (helical) follow at residues 325-345 (LGIMFGSMMAIMYSNYGLGFW) and 358-378 (LSAIVNILLAIVIGSFSIGNV). In terms of domain architecture, ABC transporter 1 spans 422–667 (IEFRGIKHIY…KGTYLQLVEA (246 aa)). 457–464 (GPSGSGKS) serves as a coordination point for ATP. An N-linked (GlcNAc...) asparagine glycan is attached at Asn-529. Helical transmembrane passes span 762 to 782 (LCGFFFAVLSGAGQPVQSVFF) and 808 to 828 (LMFLMLGLVQLITQSAQGVIF). The region spanning 764–1051 (GFFFAVLSGA…VFSFSPDMGK (288 aa)) is the ABC transmembrane type-1 2 domain. The N-linked (GlcNAc...) asparagine glycan is linked to Asn-860. 4 consecutive transmembrane segments (helical) span residues 884-904 (LGTILMVSTTLIVALTVALAF), 910-930 (LVCISTVPVLLLCGFYRFWIL), 995-1015 (ASQSFSFFCLALGFWYGGGLL), and 1025-1045 (FFLCISCVIFGSQSAGIVFSF). The ABC transporter 2 domain maps to 1086-1324 (IEFRDVHFRY…KGRYYELVHM (239 aa)). Asn-1108 carries N-linked (GlcNAc...) asparagine glycosylation. 1121-1128 (GPSGCGKS) provides a ligand contact to ATP.

The protein belongs to the ABC transporter superfamily. ABCB family. Multidrug resistance exporter (TC 3.A.1.201) subfamily.

It is found in the cell membrane. It carries out the reaction itraconazole(in) + ATP + H2O = itraconazole(out) + ADP + phosphate + H(+). ABC-type efflux transporter involved in the modulation susceptibility to itraconazole. This Trichophyton rubrum (strain ATCC MYA-4607 / CBS 118892) (Athlete's foot fungus) protein is ABC multidrug transporter MDR2.